Here is a 411-residue protein sequence, read N- to C-terminus: MDSITLNAFDVSSAYTGEFVYDLDLNLFNKMLGGDPAPKPTTQPEERPTGRPIPVPRRRVRPRPAEDQLEEPLEELVKDPIGGPRGEQVEEPVEEPVEPEHPRRIPIPRNRSTRHRFLSADSSPPSHDGAVFDFRDRPTVFQKRGRPVRDMGPVRVSYDISTDVDRLMHNLQSMVKESRAVKVSEKDVDSCHEACERKYVGALMTVSSALRTLMVMVPDIKRIDHPQIKLLVNASRNDFVNVCLTESQKQRSLGVTNVYIDGTDQPLTVNLGLDRNDRLKSTLYKMAQLWKYETKMWERFSAAAKGGYDMKDLIEARRLRVERPFEQTSQLVDYLLDSIDDLTITGVERAKLSDWFTLISRYLKLDHQLLVNELTEGYILKEENKVLKERLDSLQVQVRKLQNRDLLDKWK.

Residues 32–108 (LGGDPAPKPT…PEHPRRIPIP (77 aa)) form a disordered region.

This is an uncharacterized protein from Ictalurid herpesvirus 1 (strain Auburn) (IcHV-1).